We begin with the raw amino-acid sequence, 431 residues long: Glucose-1-phosphate adenylyltransferase (431 aa).

Lys39 is a beta-D-fructose 1,6-bisphosphate binding site. Residues Arg40, His46, and Arg52 each contribute to the AMP site. Tyr114 is a binding site for alpha-D-glucose 1-phosphate. AMP is bound at residue Arg130. Residues Gly179, 194–195 (EK), and Ser212 contribute to the alpha-D-glucose 1-phosphate site. An AMP-binding site is contributed by Arg386. Residues 419–423 (REMLR) and 429–431 (QER) each bind beta-D-fructose 1,6-bisphosphate.

The protein belongs to the bacterial/plant glucose-1-phosphate adenylyltransferase family. As to quaternary structure, homotetramer.

It catalyses the reaction alpha-D-glucose 1-phosphate + ATP + H(+) = ADP-alpha-D-glucose + diphosphate. Its pathway is glycan biosynthesis; glycogen biosynthesis. Allosterically activated by fructose-1,6-bisphosphate (F16BP) and inhibited by AMP. In terms of biological role, involved in the biosynthesis of ADP-glucose, a building block required for the elongation reactions to produce glycogen. Catalyzes the reaction between ATP and alpha-D-glucose 1-phosphate (G1P) to produce pyrophosphate and ADP-Glc. The chain is Glucose-1-phosphate adenylyltransferase from Enterobacter sp. (strain 638).